A 113-amino-acid polypeptide reads, in one-letter code: MNTVRVTFLLVFVLAVSLGQADKDENRMEMQEKTEQGKSYLDFAENLLLQKLEELEAKLLEEDSEESRNSRQKRCIGEGVPCDENDPRCCSGLVCLKPTLHGIWYKSYYCCKK.

The first 21 residues, 1 to 21 (MNTVRVTFLLVFVLAVSLGQA), serve as a signal peptide directing secretion. Positions 22 to 74 (DKDENRMEMQEKTEQGKSYLDFAENLLLQKLEELEAKLLEEDSEESRNSRQKR) are excised as a propeptide. The disordered stretch occupies residues 61-83 (EEDSEESRNSRQKRCIGEGVPCD). 3 disulfide bridges follow: C75/C90, C82/C95, and C89/C110.

This sequence belongs to the neurotoxin 14 (magi-1) family. 01 (HNTX-16) subfamily. As to expression, expressed by the venom gland.

The protein localises to the secreted. Functionally, probable ion channel inhibitor. This is U11-theraphotoxin-Hhn1s from Cyriopagopus hainanus (Chinese bird spider).